A 430-amino-acid polypeptide reads, in one-letter code: UDP-N-acetylglucosamine 1-carboxyvinyltransferase (430 aa).

22-23 is a binding site for phosphoenolpyruvate; sequence KN. Arg102 is a binding site for UDP-N-acetyl-alpha-D-glucosamine. Cys126 (proton donor) is an active-site residue. A 2-(S-cysteinyl)pyruvic acid O-phosphothioketal modification is found at Cys126. UDP-N-acetyl-alpha-D-glucosamine-binding positions include 131-135, 172-175, Asp317, and Ile339; these read RPVDL and KVSV.

The protein belongs to the EPSP synthase family. MurA subfamily.

The protein localises to the cytoplasm. It catalyses the reaction phosphoenolpyruvate + UDP-N-acetyl-alpha-D-glucosamine = UDP-N-acetyl-3-O-(1-carboxyvinyl)-alpha-D-glucosamine + phosphate. The protein operates within cell wall biogenesis; peptidoglycan biosynthesis. Cell wall formation. Adds enolpyruvyl to UDP-N-acetylglucosamine. The sequence is that of UDP-N-acetylglucosamine 1-carboxyvinyltransferase from Rhizobium etli (strain CIAT 652).